A 606-amino-acid chain; its full sequence is NADH-ubiquinone oxidoreductase chain 5 (606 aa).

Transmembrane regions (helical) follow at residues 1 to 21, 38 to 58, 87 to 107, 114 to 134, 140 to 160, 171 to 191, 213 to 233, 241 to 261, 273 to 293, 301 to 320, 325 to 347, 366 to 386, 409 to 429, 457 to 477, 488 to 508, and 582 to 602; these read MNIF…PIIA, NIIS…IYSG, MIFV…SIWY, ITQF…LVTA, LFIG…WWYG, AILY…WFLS, LMGL…HPWL, TPVS…FLLI, AQTL…ICAL, IIAF…IGIN, AFLH…GSII, MPFT…MPFL, LLMT…MIFF, LLIG…PTTT, LMAL…SLAT, and GLIK…LLLL.

Belongs to the complex I subunit 5 family. Core subunit of respiratory chain NADH dehydrogenase (Complex I) which is composed of 45 different subunits.

It is found in the mitochondrion inner membrane. The catalysed reaction is a ubiquinone + NADH + 5 H(+)(in) = a ubiquinol + NAD(+) + 4 H(+)(out). Core subunit of the mitochondrial membrane respiratory chain NADH dehydrogenase (Complex I) which catalyzes electron transfer from NADH through the respiratory chain, using ubiquinone as an electron acceptor. Essential for the catalytic activity and assembly of complex I. This chain is NADH-ubiquinone oxidoreductase chain 5 (MT-ND5), found in Rhinoceros unicornis (Greater Indian rhinoceros).